A 229-amino-acid polypeptide reads, in one-letter code: NAD(P)H-hydrate epimerase (229 aa).

A YjeF N-terminal domain is found at 10 to 217 (AINVDLELFN…ALQRKYELNL (208 aa)). Residue 60–64 (NNGGD) participates in (6S)-NADPHX binding. Residues Asn-61 and Asp-125 each contribute to the K(+) site. (6S)-NADPHX contacts are provided by residues 129–135 (GFSFKPP) and Asp-158. Ser-161 serves as a coordination point for K(+).

Belongs to the NnrE/AIBP family. Requires K(+) as cofactor.

The catalysed reaction is (6R)-NADHX = (6S)-NADHX. It catalyses the reaction (6R)-NADPHX = (6S)-NADPHX. Functionally, catalyzes the epimerization of the S- and R-forms of NAD(P)HX, a damaged form of NAD(P)H that is a result of enzymatic or heat-dependent hydration. This is a prerequisite for the S-specific NAD(P)H-hydrate dehydratase to allow the repair of both epimers of NAD(P)HX. In Drosophila virilis (Fruit fly), this protein is NAD(P)H-hydrate epimerase.